A 68-amino-acid polypeptide reads, in one-letter code: Large ribosomal subunit protein bL28 (68 aa).

Residues 1–30 are disordered; that stretch reads MAKICDHCGKKPQSGNNVSHANNKSKRRFE. The segment covering 13-22 has biased composition (polar residues); it reads QSGNNVSHAN.

It belongs to the bacterial ribosomal protein bL28 family.

The protein is Large ribosomal subunit protein bL28 of Solidesulfovibrio magneticus (strain ATCC 700980 / DSM 13731 / RS-1) (Desulfovibrio magneticus).